The sequence spans 146 residues: MKLHELQPAAGSRKVRNRVGRGTSSGNGKTSGRGQKGQKARSGGGVRLGFEGGQTPLFRRLPKRGFLNINRKEYAIVNLDQLNAFEDGAEVTPVVLIEAGIVKAEKSGIKILGNGELTKKLTVKAAKFSKSAEEAITAKGGSVEVI.

The disordered stretch occupies residues Met1–Glu51. Gly residues-rich tracts occupy residues Thr23–Gln35 and Ser42–Glu51.

It belongs to the universal ribosomal protein uL15 family. Part of the 50S ribosomal subunit.

In terms of biological role, binds to the 23S rRNA. This chain is Large ribosomal subunit protein uL15, found in Streptococcus sanguinis (strain SK36).